Reading from the N-terminus, the 1229-residue chain is Chitin synthase 4 (1229 aa).

Residues 1 to 196 (MSLPERPGAK…IVKEGKRKEK (196 aa)) are disordered. At 1 to 202 (MSLPERPGAK…RKEKIPEQLR (202 aa)) the chain is on the cytoplasmic side. Residues 18-27 (SYRKSPSRRN) are compositionally biased toward basic residues. Polar residues predominate over residues 43-66 (GQHQRGPSVNSFAETIRSPNSNIE). Basic and acidic residues predominate over residues 92–105 (IRPERNRIDRDHPN). Over residues 137-150 (SGPPSGSNSASGSG) the composition is skewed to low complexity. Composition is skewed to basic and acidic residues over residues 164 to 177 (SGRETVAEKSDNTR) and 187 to 196 (IVKEGKRKEK). Residues 203–223 (PPSAWNVYCAVITFWSPDFIM) traverse the membrane as a helical segment. Topologically, residues 224-240 (KCCGMPAKAQRRAWREK) are extracellular. A helical transmembrane segment spans residues 241–261 (IGLISLILIIMGVVGFLTFGF). At 262–495 (NQAVCGGPVL…IKVGTVDTDT (234 aa)) the chain is on the cytoplasmic side. Residues 496 to 516 (VGCIAAKVVLYVSLALILSVV) traverse the membrane as a helical segment. Residues 517 to 1054 (GARFTLALIF…LCGTFCFSMQ (538 aa)) lie on the Extracellular side of the membrane. Disordered regions lie at residues 539-589 (TSQT…RSSF) and 601-648 (GAER…DPYA). The segment covering 568 to 581 (GDVGSSVAGASSSD) has biased composition (low complexity). Residues N608, N635, and N1030 are each glycosylated (N-linked (GlcNAc...) asparagine). Polar residues predominate over residues 608 to 648 (NKSMPTTMASQASGGYMGPSSTAYRETNESRTSFLKSDPYA). Residues 1055–1075 (FVIFIELIGTLVLPAAIAFTF) traverse the membrane as a helical segment. Topologically, residues 1076-1088 (YVVIISIINQPPQ) are cytoplasmic. The chain crosses the membrane as a helical span at residues 1089-1109 (IIPLVLLGLILGLPAILIIIT). Over 1110-1114 (AHSWS) the chain is Extracellular. The helical transmembrane segment at 1115 to 1135 (YVLWMLIYLLSLPVWNFVLPA) threads the bilayer. Residues 1136–1229 (YAFWKFDDFS…QQYDEYYSDA (94 aa)) lie on the Cytoplasmic side of the membrane. The disordered stretch occupies residues 1210–1229 (WASAPPHHHQQQYDEYYSDA).

It belongs to the chitin synthase family. Class IV subfamily.

It is found in the cell membrane. It catalyses the reaction [(1-&gt;4)-N-acetyl-beta-D-glucosaminyl](n) + UDP-N-acetyl-alpha-D-glucosamine = [(1-&gt;4)-N-acetyl-beta-D-glucosaminyl](n+1) + UDP + H(+). Its function is as follows. Polymerizes chitin, a structural polymer of the cell wall and septum, by transferring the sugar moiety of UDP-GlcNAc to the non-reducing end of the growing chitin polymer. Might function as a negative regulator on expression of other CHS genes. This chain is Chitin synthase 4, found in Pyricularia oryzae (strain 70-15 / ATCC MYA-4617 / FGSC 8958) (Rice blast fungus).